A 362-amino-acid polypeptide reads, in one-letter code: Probable dual-specificity RNA methyltransferase RlmN (362 aa).

Glu-105 acts as the Proton acceptor in catalysis. Positions 111 to 344 (HNYGNSVCVT…VTIRREQGHD (234 aa)) constitute a Radical SAM core domain. An intrachain disulfide couples Cys-118 to Cys-349. [4Fe-4S] cluster is bound by residues Cys-125, Cys-129, and Cys-132. S-adenosyl-L-methionine contacts are provided by residues 175–176 (GE), Ser-207, 230–232 (SLH), and Asn-306. Cys-349 serves as the catalytic S-methylcysteine intermediate.

The protein belongs to the radical SAM superfamily. RlmN family. It depends on [4Fe-4S] cluster as a cofactor.

Its subcellular location is the cytoplasm. It catalyses the reaction adenosine(2503) in 23S rRNA + 2 reduced [2Fe-2S]-[ferredoxin] + 2 S-adenosyl-L-methionine = 2-methyladenosine(2503) in 23S rRNA + 5'-deoxyadenosine + L-methionine + 2 oxidized [2Fe-2S]-[ferredoxin] + S-adenosyl-L-homocysteine. The catalysed reaction is adenosine(37) in tRNA + 2 reduced [2Fe-2S]-[ferredoxin] + 2 S-adenosyl-L-methionine = 2-methyladenosine(37) in tRNA + 5'-deoxyadenosine + L-methionine + 2 oxidized [2Fe-2S]-[ferredoxin] + S-adenosyl-L-homocysteine. Its function is as follows. Specifically methylates position 2 of adenine 2503 in 23S rRNA and position 2 of adenine 37 in tRNAs. The sequence is that of Probable dual-specificity RNA methyltransferase RlmN from Halalkalibacterium halodurans (strain ATCC BAA-125 / DSM 18197 / FERM 7344 / JCM 9153 / C-125) (Bacillus halodurans).